Consider the following 87-residue polypeptide: LYR motif-containing protein 2 (87 aa).

The N-terminal 19 residues, 1–19 (MGSRLPPAALTLKQFLVRQ), are a transit peptide targeting the mitochondrion.

The protein belongs to the complex I LYR family.

Its subcellular location is the mitochondrion. Its function is as follows. Involved in efficient integration of the N-module into mitochondrial respiratory chain complex I. The chain is LYR motif-containing protein 2 (lyrm2) from Xenopus tropicalis (Western clawed frog).